The primary structure comprises 708 residues: GID complex associated protein 12 (708 aa).

A compositionally biased stretch (low complexity) spans 381 to 396 (SSRRNSSFSTASSEPR). Positions 381–403 (SSRRNSSFSTASSEPRPLSRRRR) are disordered.

In terms of assembly, interacts with core components of the GID/CTLH ubiquitin ligase complex. GID12 binds both the substrate receptor GID4 and the tip of GID5 in the scaffolding module, sealing GID4 onto the scaffold.

Regulator of the GID E3 ligase complex. Modulates both assembly of the substrate receptor GID4 into the GID E3 ligase complex and its activity toward its substrates. GID12-binding remodels the N-degron binding pocket in the GID(SR4) complex, and could limit substrate accessibility of a bulky substrate to a ubiquitynation active site, thereby stabilizing gluconeogenic enzyme substrates. Involved in actin patch formation. This Saccharomyces cerevisiae (strain ATCC 204508 / S288c) (Baker's yeast) protein is GID complex associated protein 12.